We begin with the raw amino-acid sequence, 248 residues long: 2,3-bisphosphoglycerate-dependent phosphoglycerate mutase (248 aa).

Residues 8–15 (RHGESTWN), 21–22 (TG), arginine 60, 87–90 (ERHY), lysine 98, 114–115 (RR), and 183–184 (GN) contribute to the substrate site. Histidine 9 acts as the Tele-phosphohistidine intermediate in catalysis. The active-site Proton donor/acceptor is glutamate 87.

This sequence belongs to the phosphoglycerate mutase family. BPG-dependent PGAM subfamily. As to quaternary structure, homodimer.

The enzyme catalyses (2R)-2-phosphoglycerate = (2R)-3-phosphoglycerate. It functions in the pathway carbohydrate degradation; glycolysis; pyruvate from D-glyceraldehyde 3-phosphate: step 3/5. Functionally, catalyzes the interconversion of 2-phosphoglycerate and 3-phosphoglycerate. The polypeptide is 2,3-bisphosphoglycerate-dependent phosphoglycerate mutase (Paraburkholderia phytofirmans (strain DSM 17436 / LMG 22146 / PsJN) (Burkholderia phytofirmans)).